A 274-amino-acid chain; its full sequence is MIKVAVTGALGRMGSNIIKTITQQEDMKVVCAFEVPNHPKKGEDVGELIGIGKIGVPLSTADELDKVLKETKPDVLVDFTIAHACVENVKIAAKNGVNLVIGTTGFTEEQKAEIEKAIKENNVAAVISQNFAIGVNIFFKTLEFLAKKLGDYDIEIIEMHHRYKKDAPSGTALRAAEIIKANRGIESVFVYGRYGMTGERKKEEIGIHALRGGDVVGDHTVIFAGDGERIELTHRASSRQAFVNGVILAIRYIADKKEGIYNTFDVLGLNEIKF.

Residues 8 to 13 (GALGRM), E34, 102 to 104 (GTT), and 128 to 131 (SQNF) contribute to the NAD(+) site. H160 acts as the Proton donor/acceptor in catalysis. H161 lines the (S)-2,3,4,5-tetrahydrodipicolinate pocket. K164 serves as the catalytic Proton donor. Position 170-171 (170-171 (GT)) interacts with (S)-2,3,4,5-tetrahydrodipicolinate.

The protein belongs to the DapB family.

It is found in the cytoplasm. The catalysed reaction is (S)-2,3,4,5-tetrahydrodipicolinate + NAD(+) + H2O = (2S,4S)-4-hydroxy-2,3,4,5-tetrahydrodipicolinate + NADH + H(+). It carries out the reaction (S)-2,3,4,5-tetrahydrodipicolinate + NADP(+) + H2O = (2S,4S)-4-hydroxy-2,3,4,5-tetrahydrodipicolinate + NADPH + H(+). It participates in amino-acid biosynthesis; L-lysine biosynthesis via DAP pathway; (S)-tetrahydrodipicolinate from L-aspartate: step 4/4. Functionally, catalyzes the conversion of 4-hydroxy-tetrahydrodipicolinate (HTPA) to tetrahydrodipicolinate. The polypeptide is 4-hydroxy-tetrahydrodipicolinate reductase (Methanocaldococcus jannaschii (strain ATCC 43067 / DSM 2661 / JAL-1 / JCM 10045 / NBRC 100440) (Methanococcus jannaschii)).